Consider the following 419-residue polypeptide: UDP-N-acetylglucosamine 1-carboxyvinyltransferase (419 aa).

Residue K22–N23 coordinates phosphoenolpyruvate. R95 is a binding site for UDP-N-acetyl-alpha-D-glucosamine. The active-site Proton donor is the C119. Residue C119 is modified to 2-(S-cysteinyl)pyruvic acid O-phosphothioketal. UDP-N-acetyl-alpha-D-glucosamine is bound by residues K164–V167, D308, and I330.

The protein belongs to the EPSP synthase family. MurA subfamily.

The protein resides in the cytoplasm. It catalyses the reaction phosphoenolpyruvate + UDP-N-acetyl-alpha-D-glucosamine = UDP-N-acetyl-3-O-(1-carboxyvinyl)-alpha-D-glucosamine + phosphate. The protein operates within cell wall biogenesis; peptidoglycan biosynthesis. Its function is as follows. Cell wall formation. Adds enolpyruvyl to UDP-N-acetylglucosamine. The sequence is that of UDP-N-acetylglucosamine 1-carboxyvinyltransferase from Rickettsia rickettsii (strain Iowa).